A 269-amino-acid polypeptide reads, in one-letter code: Phosphate import ATP-binding protein PstB 2 (269 aa).

The ABC transporter domain maps to 22–264 (LSTNDLRVFY…PSLQSTEDYV (243 aa)). ATP is bound at residue 55–62 (GPSGSGKS).

It belongs to the ABC transporter superfamily. Phosphate importer (TC 3.A.1.7) family. The complex is composed of two ATP-binding proteins (PstB), two transmembrane proteins (PstC and PstA) and a solute-binding protein (PstS).

The protein resides in the cell membrane. It carries out the reaction phosphate(out) + ATP + H2O = ADP + 2 phosphate(in) + H(+). Part of the ABC transporter complex PstSACB involved in phosphate import. Responsible for energy coupling to the transport system. This is Phosphate import ATP-binding protein PstB 2 from Lactococcus lactis subsp. lactis (strain IL1403) (Streptococcus lactis).